We begin with the raw amino-acid sequence, 138 residues long: Sec-independent protein translocase protein TatB (138 aa).

A helical transmembrane segment spans residues 1–21 (MFDIGATELLVIAIVAILVIG). The disordered stretch occupies residues 74-138 (MAKHPADQMQ…EPRLPLEGRD (65 aa)). The segment covering 83–97 (QPLDAPDPALSAAEA) has biased composition (low complexity). Residues 98–138 (RAAHTEAAKPARAAEETQADRASADEHPAASEPRLPLEGRD) show a composition bias toward basic and acidic residues.

It belongs to the TatB family. As to quaternary structure, the Tat system comprises two distinct complexes: a TatABC complex, containing multiple copies of TatA, TatB and TatC subunits, and a separate TatA complex, containing only TatA subunits. Substrates initially bind to the TatABC complex, which probably triggers association of the separate TatA complex to form the active translocon.

The protein localises to the cell inner membrane. Part of the twin-arginine translocation (Tat) system that transports large folded proteins containing a characteristic twin-arginine motif in their signal peptide across membranes. Together with TatC, TatB is part of a receptor directly interacting with Tat signal peptides. TatB may form an oligomeric binding site that transiently accommodates folded Tat precursor proteins before their translocation. The protein is Sec-independent protein translocase protein TatB of Erythrobacter litoralis (strain HTCC2594).